The chain runs to 330 residues: Clavaminate synthase-like protein At3g21360 (330 aa).

N-acetylalanine is present on A2. Residues H120, E122, and H313 each contribute to the Fe cation site.

Fe cation serves as cofactor.

The polypeptide is Clavaminate synthase-like protein At3g21360 (Arabidopsis thaliana (Mouse-ear cress)).